We begin with the raw amino-acid sequence, 123 residues long: Histone H2B (123 aa).

Positions 1 to 32 (MAPKAPGKGAKKAAKSKAPRAPGDRKRKRTRR) are disordered. Basic residues predominate over residues 9–18 (GAKKAAKSKA). S110 carries an O-linked (GlcNAc) serine glycan. A Glycyl lysine isopeptide (Lys-Gly) (interchain with G-Cter in ubiquitin) cross-link involves residue K118.

It belongs to the histone H2B family. The nucleosome is a histone octamer containing two molecules each of H2A, H2B, H3 and H4 assembled in one H3-H4 heterotetramer and two H2A-H2B heterodimers. The octamer wraps approximately 147 bp of DNA. Post-translationally, monoubiquitination of Lys-118 gives a specific tag for epigenetic transcriptional activation and is also prerequisite for histone H3 'Lys-4' and 'Lys-79' methylation. In terms of processing, glcNAcylation at Ser-110 promotes monoubiquitination of Lys-118. It fluctuates in response to extracellular glucose, and associates with transcribed genes.

It localises to the nucleus. Its subcellular location is the chromosome. Its function is as follows. Core component of nucleosome. Nucleosomes wrap and compact DNA into chromatin, limiting DNA accessibility to the cellular machineries which require DNA as a template. Histones thereby play a central role in transcription regulation, DNA repair, DNA replication and chromosomal stability. DNA accessibility is regulated via a complex set of post-translational modifications of histones, also called histone code, and nucleosome remodeling. This chain is Histone H2B, found in Holothuria tubulosa (Tubular sea cucumber).